Reading from the N-terminus, the 326-residue chain is Trans-L-3-hydroxyproline dehydratase (326 aa).

The active-site Proton acceptor is the Cys-80. Substrate contacts are provided by residues 81-82 (GH), Asp-241, and 246-247 (GS).

It belongs to the proline racemase family. Homodimer.

The catalysed reaction is trans-3-hydroxy-L-proline = 1-pyrroline-2-carboxylate + H2O. In terms of biological role, catalyzes the dehydration of trans-3-hydroxy-L-proline to delta-1-pyrroline-2-carboxylate (Pyr2C). The chain is Trans-L-3-hydroxyproline dehydratase (l3hypdh) from Saccoglossus kowalevskii (Acorn worm).